The following is a 453-amino-acid chain: Serine incorporator 1 (453 aa).

Gly-2 is lipidated: N-myristoyl glycine. The Cytoplasmic segment spans residues 2 to 39; it reads GSVLGLCSVASWIPCLCGSAPCLLCRCCPSGNNSTVTR. The helical transmembrane segment at 40-60 threads the bilayer; sequence LIYALFLLVGVCVACVMLIPG. Topologically, residues 61–88 are lumenal; sequence MEEQLNKIPGFCENEKGVVPCNILVGYK. Residues 89-109 traverse the membrane as a helical segment; the sequence is AVYRLCFGLAMFYLLLSLLMI. Topologically, residues 110 to 123 are cytoplasmic; that stretch reads KVKSSSDPRAAVHN. The helical transmembrane segment at 124–144 threads the bilayer; the sequence is GFWFFKFATAVAIIIGAFFIP. Residues 145 to 151 lie on the Lumenal side of the membrane; the sequence is EGTFTTV. A helical transmembrane segment spans residues 152–172; it reads WFYVGMAGAFCFILIQLVLLI. At 173–197 the chain is on the cytoplasmic side; it reads DFAHSWNESWVEKMEEGNSRCWYAA. The chain crosses the membrane as a helical span at residues 198–218; sequence LLSATALNYLLSLVAVVLFFV. Residues 219 to 231 lie on the Lumenal side of the membrane; the sequence is YYTHPASCAENKA. Residues 232-252 form a helical membrane-spanning segment; that stretch reads FISVNMLLCIGASVMSILPKI. Residues 253-259 lie on the Cytoplasmic side of the membrane; the sequence is QESQPRS. The helical transmembrane segment at 260-280 threads the bilayer; sequence GLLQSSVITVYTMYLTWSAMT. At 281–309 the chain is on the lumenal side; it reads NEPETNCNPSLLSIIGFNTTRPIPKDGQS. A helical membrane pass occupies residues 310 to 330; that stretch reads VQWWHPQGIIGLVLFLLCVFY. The Cytoplasmic portion of the chain corresponds to 331–387; sequence SSIRTSNNSQVNKLTLTSDESTLIEDGNGRSDGSLDDGDGIHRAVDNERDGVTYSYS. Phosphoserine is present on Ser-351. Thr-352 is modified (phosphothreonine). Ser-361 and Ser-364 each carry phosphoserine. The chain crosses the membrane as a helical span at residues 388–408; sequence FFHFMLFLASLYIMMTLTNWY. Topologically, residues 409 to 426 are lumenal; the sequence is RYEPSREMKSQWTAVWVK. Residues 427-447 form a helical membrane-spanning segment; the sequence is ISSSWIGLVLYVWTLVAPLVL. Residues 448-453 lie on the Cytoplasmic side of the membrane; that stretch reads TNRDFD.

It belongs to the TDE1 family. As to quaternary structure, interacts with SPTLC1. In terms of tissue distribution, highly expressed in the neuronal populations such as Purkinje cells in the cerebellum, brainstem and spinal motor neurons, locus coeruleus and raphe nuclei.

Its subcellular location is the endoplasmic reticulum membrane. Enhances the incorporation of serine into phosphatidylserine and sphingolipids. In Mus musculus (Mouse), this protein is Serine incorporator 1 (Serinc1).